The following is a 370-amino-acid chain: tRNA-specific 2-thiouridylase MnmA (370 aa).

Residues 9–16 and methionine 35 contribute to the ATP site; that span reads GMSGGVDS. Positions 95–97 are interaction with target base in tRNA; the sequence is NPD. Cysteine 100 (nucleophile) is an active-site residue. A disulfide bridge links cysteine 100 with cysteine 196. Glycine 124 provides a ligand contact to ATP. The interaction with tRNA stretch occupies residues 146–148; that stretch reads KDQ. Catalysis depends on cysteine 196, which acts as the Cysteine persulfide intermediate. The interaction with tRNA stretch occupies residues 308–309; that stretch reads RY.

It belongs to the MnmA/TRMU family.

The protein resides in the cytoplasm. The catalysed reaction is S-sulfanyl-L-cysteinyl-[protein] + uridine(34) in tRNA + AH2 + ATP = 2-thiouridine(34) in tRNA + L-cysteinyl-[protein] + A + AMP + diphosphate + H(+). In terms of biological role, catalyzes the 2-thiolation of uridine at the wobble position (U34) of tRNA, leading to the formation of s(2)U34. This Ralstonia pickettii (strain 12J) protein is tRNA-specific 2-thiouridylase MnmA.